The primary structure comprises 156 residues: Small ribosomal subunit protein uS7 (156 aa).

Belongs to the universal ribosomal protein uS7 family. In terms of assembly, part of the 30S ribosomal subunit. Contacts proteins S9 and S11.

In terms of biological role, one of the primary rRNA binding proteins, it binds directly to 16S rRNA where it nucleates assembly of the head domain of the 30S subunit. Is located at the subunit interface close to the decoding center, probably blocks exit of the E-site tRNA. This chain is Small ribosomal subunit protein uS7, found in Streptococcus pyogenes serotype M12 (strain MGAS2096).